The primary structure comprises 855 residues: Valine--tRNA ligase (855 aa).

The 'HIGH' region signature appears at 42–52 (PTISGKLHIGH). Positions 574–578 (KMSKS) match the 'KMSKS' region motif. Lys-577 is an ATP binding site.

Belongs to the class-I aminoacyl-tRNA synthetase family. ValS type 2 subfamily. As to quaternary structure, monomer.

It localises to the cytoplasm. It carries out the reaction tRNA(Val) + L-valine + ATP = L-valyl-tRNA(Val) + AMP + diphosphate. Catalyzes the attachment of valine to tRNA(Val). As ValRS can inadvertently accommodate and process structurally similar amino acids such as threonine, to avoid such errors, it has a 'posttransfer' editing activity that hydrolyzes mischarged Thr-tRNA(Val) in a tRNA-dependent manner. This chain is Valine--tRNA ligase, found in Wolbachia sp. subsp. Brugia malayi (strain TRS).